A 99-amino-acid chain; its full sequence is Malonate decarboxylase acyl carrier protein (99 aa).

Ser25 is modified (O-(phosphoribosyl dephospho-coenzyme A)serine).

The protein belongs to the MdcC family. In terms of processing, covalently binds the prosthetic group of malonate decarboxylase.

Its subcellular location is the cytoplasm. In terms of biological role, subunit of malonate decarboxylase, it is an acyl carrier protein to which acetyl and malonyl thioester residues are bound via a 2'-(5''-phosphoribosyl)-3'-dephospho-CoA prosthetic group and turn over during the catalytic mechanism. The chain is Malonate decarboxylase acyl carrier protein from Pseudomonas putida (Arthrobacter siderocapsulatus).